Consider the following 475-residue polypeptide: 1-aminocyclopropane-1-carboxylate synthase CMA101 (475 aa).

Lys272 bears the N6-(pyridoxal phosphate)lysine mark.

It belongs to the class-I pyridoxal-phosphate-dependent aminotransferase family. Homodimer. Requires pyridoxal 5'-phosphate as cofactor.

The catalysed reaction is S-adenosyl-L-methionine = 1-aminocyclopropane-1-carboxylate + S-methyl-5'-thioadenosine + H(+). It participates in alkene biosynthesis; ethylene biosynthesis via S-adenosyl-L-methionine; ethylene from S-adenosyl-L-methionine: step 1/2. In terms of biological role, catalyzes the formation of 1-aminocyclopropane-1-carboxylate, a direct precursor of ethylene in higher plants. In Cucurbita maxima (Pumpkin), this protein is 1-aminocyclopropane-1-carboxylate synthase CMA101 (ACS2).